The following is an 880-amino-acid chain: Alanine--tRNA ligase (880 aa).

Zn(2+) contacts are provided by histidine 567, histidine 571, cysteine 669, and histidine 673.

The protein belongs to the class-II aminoacyl-tRNA synthetase family. It depends on Zn(2+) as a cofactor.

The protein localises to the cytoplasm. It catalyses the reaction tRNA(Ala) + L-alanine + ATP = L-alanyl-tRNA(Ala) + AMP + diphosphate. Its function is as follows. Catalyzes the attachment of alanine to tRNA(Ala) in a two-step reaction: alanine is first activated by ATP to form Ala-AMP and then transferred to the acceptor end of tRNA(Ala). Also edits incorrectly charged Ser-tRNA(Ala) and Gly-tRNA(Ala) via its editing domain. The sequence is that of Alanine--tRNA ligase from Bacillus thuringiensis subsp. konkukian (strain 97-27).